The primary structure comprises 357 residues: Transcription factor PCF6 (357 aa).

Residues 1–29 (MEAAVGDGEGGGGGGGRGKRGRGGGGGEM) are disordered. Over residues 7-16 (DGEGGGGGGG) the composition is skewed to gly residues. Positions 52–110 (GKDRHSKVYTAKGIRDRRVRLSVATAIQFYDLQDRLGFDQPSKAIEWLINAASPAIDTL) constitute a TCP domain. 2 disordered regions span residues 125–162 (AADA…DKEV) and 281–307 (ANRG…QQLQ). 2 stretches are compositionally biased toward polar residues: residues 142–155 (LSNK…SETS) and 284–295 (GTLQSNSPSNMS).

Forms homodimers and heterodimers.

The protein localises to the nucleus. Transcription activator. Binds the promoter core sequence 5'-GGNCC-3'. The chain is Transcription factor PCF6 (PCF6) from Oryza sativa subsp. japonica (Rice).